A 429-amino-acid chain; its full sequence is Tyrosine--tRNA ligase (429 aa).

Position 36 (Tyr36) interacts with L-tyrosine. The 'HIGH' region motif lies at 41–50 (PTAASLHAGH). Residues Tyr171 and Gln175 each coordinate L-tyrosine. The 'KMSKS' region signature appears at 231-235 (KFGKS). Residue Lys234 coordinates ATP. One can recognise an S4 RNA-binding domain in the interval 360 to 417 (ATIVDLLVATGLAESRGAARRTVNEGGAAVNNQKIADPDWTPADGDYLHGRWLVVRRG).

The protein belongs to the class-I aminoacyl-tRNA synthetase family. TyrS type 1 subfamily. As to quaternary structure, homodimer.

It localises to the cytoplasm. The catalysed reaction is tRNA(Tyr) + L-tyrosine + ATP = L-tyrosyl-tRNA(Tyr) + AMP + diphosphate + H(+). Functionally, catalyzes the attachment of tyrosine to tRNA(Tyr) in a two-step reaction: tyrosine is first activated by ATP to form Tyr-AMP and then transferred to the acceptor end of tRNA(Tyr). The protein is Tyrosine--tRNA ligase of Nocardia farcinica (strain IFM 10152).